A 73-amino-acid polypeptide reads, in one-letter code: MKFHIIFCLLAALMMTSAFAEVTVEPLRHSNKNPTESECKNACADAYAKGDQSRIPEAHNFRDYYCNCHITVQ.

The N-terminal stretch at 1-20 (MKFHIIFCLLAALMMTSAFA) is a signal peptide.

This sequence belongs to the scoloptoxin-15 family. Contains 2 disulfide bonds. Expressed by the venom gland.

It is found in the secreted. This is U-scoloptoxin(15)-Sa1a from Scolopendra alternans (Florida Keys giant centipede).